The sequence spans 426 residues: MSVTVVLGSQWGDEGKGKLVDILSAEVDICAHCAGGSNAGHTIVVPVGPEDLRVPFAPQWCLLNPACTGLIGSGVVVHLPSLFSELDALAAQGLDCTNRLFISDRAHLVFDFHRIVDGLKEVELGGSWYHWDNQKWIGPAYSSKASRSGLRVHHLFDDTFAEKFRKLVEGWFKRYGKFEYDTEGEILRYKVLAERLRPCVIDCVVYIHHAISSGKRVLVEGANALMLDLDFGTYPFVTSSSTSVGGVCTGLGIPPKMIGKPIGVVKAYTTRVGGGPFPTEQLNDVGTHLQEVGREFGTNTGRRRRCGWLDLVVLKYSCMINGFDTLNITKLDILDKLPEIKVGVKYLVDGKELSGFPADLDLLAKVDVEYATLPGWNTSIVDVTSCDALPENCRKYIEYIETFLGVPVEWIGVGPGRNSMLIKEVT.

GTP contacts are provided by residues 12–18 (GDEGKGK) and 40–42 (GHT). Aspartate 13 (proton acceptor) is an active-site residue. 2 residues coordinate Mg(2+): aspartate 13 and glycine 40. IMP contacts are provided by residues 13 to 16 (DEGK), 38 to 41 (NAGH), arginine 147, asparagine 223, threonine 238, and arginine 302. The active-site Proton donor is histidine 41. 298 to 304 (TNTGRRR) contributes to the substrate binding site. GTP is bound by residues arginine 304, 330-332 (KLD), and 412-414 (GVG).

This sequence belongs to the adenylosuccinate synthetase family. In terms of assembly, homodimer. Requires Mg(2+) as cofactor.

Its subcellular location is the cytoplasm. The catalysed reaction is IMP + L-aspartate + GTP = N(6)-(1,2-dicarboxyethyl)-AMP + GDP + phosphate + 2 H(+). It participates in purine metabolism; AMP biosynthesis via de novo pathway; AMP from IMP: step 1/2. Functionally, plays an important role in the de novo pathway and in the salvage pathway of purine nucleotide biosynthesis. Catalyzes the first committed step in the biosynthesis of AMP from IMP. The protein is Adenylosuccinate synthetase 2 of Laccaria bicolor (strain S238N-H82 / ATCC MYA-4686) (Bicoloured deceiver).